The following is a 128-amino-acid chain: Protein ApaG (128 aa).

Residues 1–123 (MTSSPDITVS…FRLDIAPESG (123 aa)) form the ApaG domain.

The polypeptide is Protein ApaG (Deinococcus radiodurans (strain ATCC 13939 / DSM 20539 / JCM 16871 / CCUG 27074 / LMG 4051 / NBRC 15346 / NCIMB 9279 / VKM B-1422 / R1)).